The chain runs to 202 residues: Superoxide dismutase [Mn/Fe] (202 aa).

Fe(3+)-binding residues include His27, His81, Asp163, and His167. 4 residues coordinate Mn(2+): His27, His81, Asp163, and His167.

This sequence belongs to the iron/manganese superoxide dismutase family. Requires Mn(2+) as cofactor. It depends on Fe(3+) as a cofactor.

It carries out the reaction 2 superoxide + 2 H(+) = H2O2 + O2. Destroys superoxide anion radicals which are normally produced within the cells and which are toxic to biological systems. Catalyzes the dismutation of superoxide anion radicals into O2 and H2O2 by successive reduction and oxidation of the transition metal ion at the active site. The polypeptide is Superoxide dismutase [Mn/Fe] (sodA) (Streptococcus agalactiae serotype V (strain ATCC BAA-611 / 2603 V/R)).